Consider the following 275-residue polypeptide: Probable CCR4-associated factor 1 homolog 7 (275 aa).

Residues D40, E42, D167, and D236 each contribute to the a divalent metal cation site.

The protein belongs to the CAF1 family. Component of the CCR4-NOT complex, at least composed of CRR4 and CAF1 proteins. A divalent metal cation serves as cofactor.

It localises to the nucleus. It is found in the cytoplasm. The catalysed reaction is Exonucleolytic cleavage of poly(A) to 5'-AMP.. Ubiquitous transcription factor required for a diverse set of processes. It is a component of the CCR4 complex involved in the control of gene expression. The protein is Probable CCR4-associated factor 1 homolog 7 (CAF1-7) of Arabidopsis thaliana (Mouse-ear cress).